A 282-amino-acid polypeptide reads, in one-letter code: Bifunctional protein FolD (282 aa).

Residues 166–168 and I232 each bind NADP(+); that span reads GAS.

This sequence belongs to the tetrahydrofolate dehydrogenase/cyclohydrolase family. In terms of assembly, homodimer.

It carries out the reaction (6R)-5,10-methylene-5,6,7,8-tetrahydrofolate + NADP(+) = (6R)-5,10-methenyltetrahydrofolate + NADPH. It catalyses the reaction (6R)-5,10-methenyltetrahydrofolate + H2O = (6R)-10-formyltetrahydrofolate + H(+). Its pathway is one-carbon metabolism; tetrahydrofolate interconversion. In terms of biological role, catalyzes the oxidation of 5,10-methylenetetrahydrofolate to 5,10-methenyltetrahydrofolate and then the hydrolysis of 5,10-methenyltetrahydrofolate to 10-formyltetrahydrofolate. This is Bifunctional protein FolD from Haemophilus influenzae (strain PittEE).